The primary structure comprises 282 residues: ABC transporter I family member 21 (282 aa).

One can recognise an ABC transporter domain in the interval 13–248 (IRVSGMQFSY…KTSPNLLSVV (236 aa)). Residue 46-53 (GANGSGKT) coordinates ATP.

It belongs to the ABC transporter superfamily. ABCI family. As to expression, expressed in root elongating zone and root meristem, as well as in elongating etiolated hypocotyls.

It is found in the cytoplasm. The chain is ABC transporter I family member 21 (ABCI21) from Arabidopsis thaliana (Mouse-ear cress).